Here is a 550-residue protein sequence, read N- to C-terminus: CTP synthase (550 aa).

An amidoligase domain region spans residues 1-270 (MTKFVFVTGG…DRLICEELRL (270 aa)). Ser-13 lines the CTP pocket. A UTP-binding site is contributed by Ser-13. ATP contacts are provided by residues 14 to 19 (SLGKGI) and Asp-71. Positions 71 and 144 each coordinate Mg(2+). CTP-binding positions include 151–153 (DIE), 191–196 (KTKPTQ), and Lys-227. UTP-binding positions include 191 to 196 (KTKPTQ) and Lys-227. The region spanning 295–547 (TIGMVGKYVD…VEAALASQQR (253 aa)) is the Glutamine amidotransferase type-1 domain. Gly-356 provides a ligand contact to L-glutamine. The active-site Nucleophile; for glutamine hydrolysis is the Cys-383. Residues 384–387 (LGMQ), Glu-407, and Arg-473 contribute to the L-glutamine site. Residues His-520 and Glu-522 contribute to the active site.

It belongs to the CTP synthase family. Homotetramer.

The enzyme catalyses UTP + L-glutamine + ATP + H2O = CTP + L-glutamate + ADP + phosphate + 2 H(+). It carries out the reaction L-glutamine + H2O = L-glutamate + NH4(+). The catalysed reaction is UTP + NH4(+) + ATP = CTP + ADP + phosphate + 2 H(+). Its pathway is pyrimidine metabolism; CTP biosynthesis via de novo pathway; CTP from UDP: step 2/2. Its activity is regulated as follows. Allosterically activated by GTP, when glutamine is the substrate; GTP has no effect on the reaction when ammonia is the substrate. The allosteric effector GTP functions by stabilizing the protein conformation that binds the tetrahedral intermediate(s) formed during glutamine hydrolysis. Inhibited by the product CTP, via allosteric rather than competitive inhibition. Functionally, catalyzes the ATP-dependent amination of UTP to CTP with either L-glutamine or ammonia as the source of nitrogen. Regulates intracellular CTP levels through interactions with the four ribonucleotide triphosphates. The protein is CTP synthase of Cupriavidus taiwanensis (strain DSM 17343 / BCRC 17206 / CCUG 44338 / CIP 107171 / LMG 19424 / R1) (Ralstonia taiwanensis (strain LMG 19424)).